Reading from the N-terminus, the 337-residue chain is Glyceraldehyde-3-phosphate dehydrogenase, cytosolic (337 aa).

NAD(+) contacts are provided by residues 13–14 (RI), D35, and R82. Residues 153-155 (SCT), T184, 213-214 (TG), and R236 each bind D-glyceraldehyde 3-phosphate. C154 (nucleophile) is an active-site residue. An NAD(+)-binding site is contributed by N318.

This sequence belongs to the glyceraldehyde-3-phosphate dehydrogenase family. As to quaternary structure, homotetramer.

Its subcellular location is the cytoplasm. It catalyses the reaction D-glyceraldehyde 3-phosphate + phosphate + NAD(+) = (2R)-3-phospho-glyceroyl phosphate + NADH + H(+). The protein operates within carbohydrate degradation; glycolysis; pyruvate from D-glyceraldehyde 3-phosphate: step 1/5. Functionally, key enzyme in glycolysis that catalyzes the first step of the pathway by converting D-glyceraldehyde 3-phosphate (G3P) into 3-phospho-D-glyceroyl phosphate. Essential for the maintenance of cellular ATP levels and carbohydrate metabolism. The polypeptide is Glyceraldehyde-3-phosphate dehydrogenase, cytosolic (GAPC) (Craterostigma plantagineum (Blue gem)).